We begin with the raw amino-acid sequence, 195 residues long: Iron-sulfur flavoprotein AF_1519 (195 aa).

The [4Fe-4S] cluster site is built by cysteine 45, cysteine 48, cysteine 51, and cysteine 57.

It belongs to the SsuE family. Isf subfamily. In terms of assembly, homodimer. FMN is required as a cofactor. [4Fe-4S] cluster serves as cofactor.

Redox-active protein probably involved in electron transport. The sequence is that of Iron-sulfur flavoprotein AF_1519 from Archaeoglobus fulgidus (strain ATCC 49558 / DSM 4304 / JCM 9628 / NBRC 100126 / VC-16).